We begin with the raw amino-acid sequence, 111 residues long: Ghrelin (111 aa).

Positions M1–A26 are cleaved as a signal peptide. The segment covering S28–P37 has biased composition (polar residues). The tract at residues S28 to D53 is disordered. Residue S29 is the site of O-decanoyl serine; alternate attachment. S29 carries the O-hexanoyl serine; alternate lipid modification. Residue S29 is the site of O-octanoyl serine; alternate attachment. A compositionally biased stretch (basic and acidic residues) spans Q38 to D53. At V47 the chain carries Valine amide. A propeptide spans D51 to E111 (removed in mature form).

This sequence belongs to the motilin family. Post-translationally, O-octanoylated by GOAT/MBOAT4. O-octanoylation or O-decanoylation is essential for activity. The O-decanoylated form ghrelin-21-C10 differs in the length of the carbon backbone of the carboxylic acid forming an ester bond with Ser-29. 44% of eel ghrelin is O-decanoylated. As to expression, highest levels in stomach and anterior intestine. Lower levels in posterior intestine, kidney and brain. Low levels in heart, head kidney and middle intestine.

It localises to the secreted. Ligand for growth hormone secretagogue receptor type 1 (GHSR). Induces the release of growth hormone from the pituitary. Has an appetite-stimulating effect, induces adiposity and stimulates gastric acid secretion. Involved in growth regulation. The chain is Ghrelin (ghrl) from Anguilla japonica (Japanese eel).